The chain runs to 195 residues: Ribonuclease HII (195 aa).

The region spanning 8–195 (WGVVGVDEAG…FAPVRRLLGG (188 aa)) is the RNase H type-2 domain. Residues Asp14, Glu15, and Asp106 each contribute to the a divalent metal cation site.

This sequence belongs to the RNase HII family. Mn(2+) is required as a cofactor. The cofactor is Mg(2+).

It is found in the cytoplasm. It carries out the reaction Endonucleolytic cleavage to 5'-phosphomonoester.. In terms of biological role, endonuclease that specifically degrades the RNA of RNA-DNA hybrids. The protein is Ribonuclease HII of Halorhodospira halophila (strain DSM 244 / SL1) (Ectothiorhodospira halophila (strain DSM 244 / SL1)).